Reading from the N-terminus, the 342-residue chain is Probable RNA methyltransferase PST_2231 (342 aa).

Glu91 (proton acceptor) is an active-site residue. Residues Leu94 to Asp320 enclose the Radical SAM core domain. Cys101 and Cys325 are joined by a disulfide. Residues Cys108, Cys112, and Cys115 each coordinate [4Fe-4S] cluster. S-adenosyl-L-methionine is bound by residues Gly153–Glu154, Ser183, Ser206–His208, and Asn282. Cys325 serves as the catalytic S-methylcysteine intermediate.

Belongs to the radical SAM superfamily. RlmN family. It depends on [4Fe-4S] cluster as a cofactor.

The protein resides in the cytoplasm. The polypeptide is Probable RNA methyltransferase PST_2231 (Stutzerimonas stutzeri (strain A1501) (Pseudomonas stutzeri)).